Here is an 84-residue protein sequence, read N- to C-terminus: ATP synthase subunit c (84 aa).

A run of 2 helical transmembrane segments spans residues 9 to 29 (LGLA…GCGI) and 57 to 77 (ILGL…NLII).

The protein belongs to the ATPase C chain family. F-type ATPases have 2 components, F(1) - the catalytic core - and F(0) - the membrane proton channel. F(1) has five subunits: alpha(3), beta(3), gamma(1), delta(1), epsilon(1). F(0) has three main subunits: a(1), b(2) and c(10-14). The alpha and beta chains form an alternating ring which encloses part of the gamma chain. F(1) is attached to F(0) by a central stalk formed by the gamma and epsilon chains, while a peripheral stalk is formed by the delta and b chains.

It is found in the cell membrane. Functionally, f(1)F(0) ATP synthase produces ATP from ADP in the presence of a proton or sodium gradient. F-type ATPases consist of two structural domains, F(1) containing the extramembraneous catalytic core and F(0) containing the membrane proton channel, linked together by a central stalk and a peripheral stalk. During catalysis, ATP synthesis in the catalytic domain of F(1) is coupled via a rotary mechanism of the central stalk subunits to proton translocation. Its function is as follows. Key component of the F(0) channel; it plays a direct role in translocation across the membrane. A homomeric c-ring of between 10-14 subunits forms the central stalk rotor element with the F(1) delta and epsilon subunits. The chain is ATP synthase subunit c from Lawsonia intracellularis (strain PHE/MN1-00).